Reading from the N-terminus, the 207-residue chain is Urease accessory protein UreG (207 aa).

A GTP-binding site is contributed by 13 to 20 (GPVGSGKT).

Belongs to the SIMIBI class G3E GTPase family. UreG subfamily. Homodimer. UreD, UreF and UreG form a complex that acts as a GTP-hydrolysis-dependent molecular chaperone, activating the urease apoprotein by helping to assemble the nickel containing metallocenter of UreC. The UreE protein probably delivers the nickel.

Its subcellular location is the cytoplasm. Its function is as follows. Facilitates the functional incorporation of the urease nickel metallocenter. This process requires GTP hydrolysis, probably effectuated by UreG. In Azoarcus sp. (strain BH72), this protein is Urease accessory protein UreG.